A 95-amino-acid polypeptide reads, in one-letter code: Aspartyl/glutamyl-tRNA(Asn/Gln) amidotransferase subunit C (95 aa).

The protein belongs to the GatC family. In terms of assembly, heterotrimer of A, B and C subunits.

It carries out the reaction L-glutamyl-tRNA(Gln) + L-glutamine + ATP + H2O = L-glutaminyl-tRNA(Gln) + L-glutamate + ADP + phosphate + H(+). It catalyses the reaction L-aspartyl-tRNA(Asn) + L-glutamine + ATP + H2O = L-asparaginyl-tRNA(Asn) + L-glutamate + ADP + phosphate + 2 H(+). Its function is as follows. Allows the formation of correctly charged Asn-tRNA(Asn) or Gln-tRNA(Gln) through the transamidation of misacylated Asp-tRNA(Asn) or Glu-tRNA(Gln) in organisms which lack either or both of asparaginyl-tRNA or glutaminyl-tRNA synthetases. The reaction takes place in the presence of glutamine and ATP through an activated phospho-Asp-tRNA(Asn) or phospho-Glu-tRNA(Gln). The chain is Aspartyl/glutamyl-tRNA(Asn/Gln) amidotransferase subunit C from Maricaulis maris (strain MCS10) (Caulobacter maris).